The primary structure comprises 182 residues: Large ribosomal subunit protein uL5 (182 aa).

The protein belongs to the universal ribosomal protein uL5 family. As to quaternary structure, part of the 50S ribosomal subunit; part of the 5S rRNA/L5/L18/L25 subcomplex. Contacts the 5S rRNA and the P site tRNA. Forms a bridge to the 30S subunit in the 70S ribosome.

Its function is as follows. This is one of the proteins that bind and probably mediate the attachment of the 5S RNA into the large ribosomal subunit, where it forms part of the central protuberance. In the 70S ribosome it contacts protein S13 of the 30S subunit (bridge B1b), connecting the 2 subunits; this bridge is implicated in subunit movement. Contacts the P site tRNA; the 5S rRNA and some of its associated proteins might help stabilize positioning of ribosome-bound tRNAs. This Mycoplasma mobile (strain ATCC 43663 / 163K / NCTC 11711) (Mesomycoplasma mobile) protein is Large ribosomal subunit protein uL5.